Consider the following 520-residue polypeptide: Developmental regulatory protein wetA (520 aa).

3 stretches are compositionally biased toward polar residues: residues 109–118 (TATHALSISP), 155–165 (QSFSPSLMRSS), and 378–392 (SSQK…SQVH). Disordered stretches follow at residues 109-165 (TATH…MRSS), 378-454 (SSQK…SNKS), and 468-496 (KKIL…RRRK). Positions 420-429 (PTHRRTHSRK) are enriched in basic residues. A compositionally biased stretch (low complexity) spans 445-454 (SSSSRGSNKS).

Belongs to the wetA family.

In terms of biological role, brlA, abaA and wetA are pivotal regulators of conidiophore development and conidium maturation. They act individually and together to regulate their own expression and that of numerous other sporulation-specific genes. In Penicillium roqueforti (strain FM164), this protein is Developmental regulatory protein wetA.